The chain runs to 229 residues: Aldehyde oxidoreductase iron-sulfur-binding subunit PaoA (229 aa).

Residues 1–21 (MSNQGEYPEDNRVGKHEPHDL) are disordered. Residues 1 to 53 (MSNQGEYPEDNRVGKHEPHDLSLTRRDLIKVSAATAAAAVVYPHSTLAASVPA) constitute a signal peptide (tat-type signal). The segment covering 9-21 (EDNRVGKHEPHDL) has biased composition (basic and acidic residues). The 77-residue stretch at 61 to 137 (MPLTLKVNGK…GAEITTIEGL (77 aa)) folds into the 2Fe-2S ferredoxin-type domain. Cys-99, Cys-104, Gly-105, Cys-107, Cys-119, Cys-158, Cys-161, Cys-208, and Cys-210 together coordinate [2Fe-2S] cluster.

Heterotrimer composed of PaoA, PaoB and PaoC. The cofactor is [2Fe-2S] cluster. Post-translationally, exported by the Tat system. The position of the signal peptide cleavage has not been experimentally proven.

Its subcellular location is the periplasm. It carries out the reaction an aldehyde + A + H2O = a carboxylate + AH2 + H(+). Oxidizes aldehydes to the corresponding carboxylic acids with a preference for aromatic aldehydes. It might play a role in the detoxification of aldehydes to avoid cell damage. The polypeptide is Aldehyde oxidoreductase iron-sulfur-binding subunit PaoA (Escherichia coli O157:H7).